A 204-amino-acid polypeptide reads, in one-letter code: Protein DESIGUAL 4 (204 aa).

4 consecutive transmembrane segments (helical) span residues 13–33 (IITV…VAGF), 60–80 (FVLG…ANVI), 107–127 (CLFL…NGIW), and 143–163 (VFSI…IYYI). Positions 177 to 204 (KPNKTKPSELKPIPTEPNEAEPNSTPNP) are disordered. N-linked (GlcNAc...) asparagine glycosylation is present at asparagine 179.

The protein belongs to the DESIGUAL family. Only expressed in inflorescences.

Its subcellular location is the endoplasmic reticulum membrane. This is Protein DESIGUAL 4 from Arabidopsis thaliana (Mouse-ear cress).